We begin with the raw amino-acid sequence, 1603 residues long: Transcription factor Gibbin (1603 aa).

Disordered stretches follow at residues 19–108, 150–236, 264–285, and 394–467; these read PDYL…SSSR, LRLS…STDY, LEPP…FLDP, and CRRR…RKGK. The span at 30 to 47 shows a compositional bias: pro residues; the sequence is GGPPTPRPLLPTRPPASP. The residue at position 79 (lysine 79) is an N6-acetyllysine. The span at 166–178 shows a compositional bias: polar residues; it reads SFFSSPSLANSIR. Over residues 179–194 the composition is skewed to basic and acidic residues; it reads SPEERATPHAKSERPS. Residues 216 to 225 are compositionally biased toward low complexity; it reads PGATAAATGL. Position 268 is a phosphoserine (serine 268). Residues 273 to 285 are compositionally biased toward low complexity; the sequence is PQLLDPQPRFLDP. A DNA-binding region (a.T hook 1) is located at residues 396–408; that stretch reads RRKAGRGRKADAG. The span at 428–446 shows a compositional bias: pro residues; that stretch reads EPPPPPPPPPPALPGPGPV. The segment at residues 544–556 is a DNA-binding region (a.T hook 2); sequence KRKRGRPPKNLLL. Positions 581-607 are disordered; it reads MPEVKKRRRRKQKLASPQPSYAADAND. Serine 596 is subject to Phosphoserine. Residue lysine 609 forms a Glycyl lysine isopeptide (Lys-Gly) (interchain with G-Cter in SUMO2) linkage. Disordered regions lie at residues 717-792 and 806-827; these read LTEL…RNCG and LESG…GQTE. The span at 737–746 shows a compositional bias: basic residues; sequence KPKRKRRSRK. Polar residues predominate over residues 816 to 827; sequence YYSTGAPSGQTE. Phosphoserine occurs at positions 829 and 846. An Omega-N-methylarginine modification is found at arginine 891. 2 positions are modified to phosphoserine: serine 896 and serine 1064. 2 disordered regions span residues 1159–1198 and 1253–1286; these read VSET…QSSL and ASAA…KKER. 2 stretches are compositionally biased toward low complexity: residues 1160–1171 and 1187–1198; these read SETFSESSSDST and SEASSSEGQSSL. A Phosphoserine modification is found at serine 1187. Serine 1322, serine 1324, and serine 1399 each carry phosphoserine. Residue threonine 1401 is modified to Phosphothreonine. Serine 1403 carries the phosphoserine modification. Residue lysine 1409 forms a Glycyl lysine isopeptide (Lys-Gly) (interchain with G-Cter in SUMO2) linkage. Residues 1503–1533 are disordered; that stretch reads PHLASPPATPKADKEPLEMARPPGPPRGPAA. Phosphoserine occurs at positions 1507 and 1549.

It is found in the nucleus. The protein localises to the chromosome. Functionally, transcription factor required for the proper patterning of the epidermis, which plays a key role in early epithelial morphogenesis. Directly binds promoter and enhancer regions and acts by maintaining local enhancer-promoter chromatin architecture. Interacts with many sequence-specific zinc-finger transcription factors and methyl-CpG-binding proteins to regulate the expression of mesoderm genes that wire surface ectoderm stratification. This chain is Transcription factor Gibbin, found in Homo sapiens (Human).